Consider the following 373-residue polypeptide: Erythronate-4-phosphate dehydrogenase (373 aa).

Residues S45 and T66 each coordinate substrate. NAD(+)-binding residues include D146 and T173. R206 is an active-site residue. D230 serves as a coordination point for NAD(+). Residue E235 is part of the active site. The active-site Proton donor is H252. An NAD(+)-binding site is contributed by G255. A substrate-binding site is contributed by Y256.

This sequence belongs to the D-isomer specific 2-hydroxyacid dehydrogenase family. PdxB subfamily. In terms of assembly, homodimer.

It is found in the cytoplasm. It carries out the reaction 4-phospho-D-erythronate + NAD(+) = (R)-3-hydroxy-2-oxo-4-phosphooxybutanoate + NADH + H(+). Its pathway is cofactor biosynthesis; pyridoxine 5'-phosphate biosynthesis; pyridoxine 5'-phosphate from D-erythrose 4-phosphate: step 2/5. In terms of biological role, catalyzes the oxidation of erythronate-4-phosphate to 3-hydroxy-2-oxo-4-phosphonooxybutanoate. This Saccharophagus degradans (strain 2-40 / ATCC 43961 / DSM 17024) protein is Erythronate-4-phosphate dehydrogenase.